The following is a 392-amino-acid chain: Putative cystathionine gamma-lyase (392 aa).

Polar residues predominate over residues 1-10; the sequence is MSDSATTDSA. The tract at residues 1–41 is disordered; it reads MSDSATTDSAGTGGERSASAPGDGTRAVRAGLPEPVKHEPT. Lys216 carries the N6-(pyridoxal phosphate)lysine modification.

The protein belongs to the trans-sulfuration enzymes family. Pyridoxal 5'-phosphate is required as a cofactor.

It is found in the cytoplasm. The catalysed reaction is L,L-cystathionine + H2O = 2-oxobutanoate + L-cysteine + NH4(+). It participates in amino-acid biosynthesis; L-cysteine biosynthesis; L-cysteine from L-homocysteine and L-serine: step 2/2. In Streptomyces coelicolor (strain ATCC BAA-471 / A3(2) / M145), this protein is Putative cystathionine gamma-lyase (cysA).